The chain runs to 334 residues: MTPIDAKRPLQLNDQGQLRHFLSLDGLPRELLTEILDTADSFLEVGARAVKKVPLLRGKTVCNVFFENSTRTRTTFELAAQRLSADVISLNVSTSSTSKGETLFDTLRNLEAMAADMFVVRHSDSGAAHFIAEHVCPDVAVINGGDGRHAHPTQGMLDMLTIRRHKGSFENLSVAIVGDILHSRVARSDMLALKALGCPDIRVIGPKTLIPIGIEQYGVKVYTDLAEGLKDVDVVIMLRLQRERMAGGLLPSEGEFYRLFGLTTARLAGAKPDAIVMHPGPINRGVEIESAVADGKHSVILNQVTYGIAVRMAVLSMAMSGQNAQRQFDQENAQ.

Carbamoyl phosphate-binding residues include arginine 71 and threonine 72. Lysine 99 provides a ligand contact to L-aspartate. The carbamoyl phosphate site is built by arginine 121, histidine 151, and glutamine 154. Arginine 184 and arginine 239 together coordinate L-aspartate. 2 residues coordinate carbamoyl phosphate: glycine 280 and proline 281.

It belongs to the aspartate/ornithine carbamoyltransferase superfamily. ATCase family. Heterododecamer (2C3:3R2) of six catalytic PyrB chains organized as two trimers (C3), and six regulatory PyrI chains organized as three dimers (R2).

It catalyses the reaction carbamoyl phosphate + L-aspartate = N-carbamoyl-L-aspartate + phosphate + H(+). It functions in the pathway pyrimidine metabolism; UMP biosynthesis via de novo pathway; (S)-dihydroorotate from bicarbonate: step 2/3. Catalyzes the condensation of carbamoyl phosphate and aspartate to form carbamoyl aspartate and inorganic phosphate, the committed step in the de novo pyrimidine nucleotide biosynthesis pathway. The sequence is that of Aspartate carbamoyltransferase catalytic subunit from Pseudomonas putida (strain GB-1).